The chain runs to 552 residues: 5'-AMP-activated protein kinase catalytic subunit alpha-2 (552 aa).

Residues 16 to 268 enclose the Protein kinase domain; sequence YVLGDTLGVG…IKDIREHEWF (253 aa). ATP contacts are provided by residues 22–30 and K45; that span reads LGVGTFGKV. D139 functions as the Proton acceptor in the catalytic mechanism. T172 bears the Phosphothreonine; by LKB1 and CaMKK2 mark. T258 is subject to Phosphothreonine. Residues 291–376 form an AIS region; sequence EAVKEVCEKF…PERMPPLIAD (86 aa). S377 bears the Phosphoserine mark. The interval 478-519 is disordered; the sequence is EQRSGSSTPQRSCSAAGLHRPRSSLDSVTAESHSLSGSLSGS. Polar residues predominate over residues 480–490; it reads RSGSSTPQRSC. Phosphoserine is present on S491. The span at 509–519 shows a compositional bias: low complexity; the sequence is SHSLSGSLSGS.

It belongs to the protein kinase superfamily. CAMK Ser/Thr protein kinase family. SNF1 subfamily. AMPK is a heterotrimer of an alpha catalytic subunit (PRKAA1 or PRKAA2), a beta (PRKAB1 or PRKAB2) and a gamma non-catalytic subunits (PRKAG1, PRKAG2 or PRKAG3). Interacts with FNIP1 and FNIP2. Interacts with DUSP29. Interacts with ARF6. The phosphorylated form at Thr-172 mediated by CamKK2 interacts with ACSS2. Requires Mg(2+) as cofactor. Post-translationally, ubiquitinated. In terms of processing, phosphorylated at Thr-172 by STK11/LKB1 in complex with STE20-related adapter-alpha (STRADA) pseudo kinase and CAB39. Also phosphorylated at Thr-172 by CAMKK2; triggered by a rise in intracellular calcium ions, without detectable changes in the AMP/ATP ratio. CAMKK1 can also phosphorylate Thr-172, but at much lower level. Dephosphorylated by protein phosphatase 2A and 2C (PP2A and PP2C). Phosphorylated by ULK1; leading to negatively regulate AMPK activity and suggesting the existence of a regulatory feedback loop between ULK1 and AMPK. Dephosphorylated by PPM1A and PPM1B at Thr-172 (mediated by STK11/LKB1).

The protein resides in the cytoplasm. Its subcellular location is the nucleus. It carries out the reaction L-seryl-[protein] + ATP = O-phospho-L-seryl-[protein] + ADP + H(+). The catalysed reaction is L-threonyl-[protein] + ATP = O-phospho-L-threonyl-[protein] + ADP + H(+). The enzyme catalyses L-seryl-[acetyl-CoA carboxylase] + ATP = O-phospho-L-seryl-[acetyl-CoA carboxylase] + ADP + H(+). It catalyses the reaction L-seryl-[3-hydroxy-3-methylglutaryl-coenzyme A reductase] + ATP = O-phospho-L-seryl-[3-hydroxy-3-methylglutaryl-coenzyme A reductase] + ADP + H(+). With respect to regulation, activated by phosphorylation on Thr-172. Binding of AMP to non-catalytic gamma subunit (PRKAG1, PRKAG2 or PRKAG3) results in allosteric activation, inducing phosphorylation on Thr-172. AMP-binding to gamma subunit also sustains activity by preventing dephosphorylation of Thr-172. ADP also stimulates Thr-172 phosphorylation, without stimulating already phosphorylated AMPK. ATP promotes dephosphorylation of Thr-172, rendering the enzyme inactive. Under physiological conditions AMPK mainly exists in its inactive form in complex with ATP, which is much more abundant than AMP. Selectively inhibited by compound C (6-[4-(2-Piperidin-1-yl-ethoxy)-phenyl)]-3-pyridin-4-yl-pyyrazolo[1,5-a] pyrimidine. Activated by resveratrol, a natural polyphenol present in red wine, and S17834, a synthetic polyphenol. Salicylate/aspirin directly activates kinase activity, primarily by inhibiting Thr-172 dephosphorylation. Catalytic subunit of AMP-activated protein kinase (AMPK), an energy sensor protein kinase that plays a key role in regulating cellular energy metabolism. In response to reduction of intracellular ATP levels, AMPK activates energy-producing pathways and inhibits energy-consuming processes: inhibits protein, carbohydrate and lipid biosynthesis, as well as cell growth and proliferation. AMPK acts via direct phosphorylation of metabolic enzymes, and by longer-term effects via phosphorylation of transcription regulators. Regulates lipid synthesis by phosphorylating and inactivating lipid metabolic enzymes such as ACACA, ACACB, GYS1, HMGCR and LIPE; regulates fatty acid and cholesterol synthesis by phosphorylating acetyl-CoA carboxylase (ACACA and ACACB) and hormone-sensitive lipase (LIPE) enzymes, respectively. Promotes lipolysis of lipid droplets by mediating phosphorylation of isoform 1 of CHKA (CHKalpha2). Regulates insulin-signaling and glycolysis by phosphorylating IRS1, PFKFB2 and PFKFB3. Involved in insulin receptor/INSR internalization. AMPK stimulates glucose uptake in muscle by increasing the translocation of the glucose transporter SLC2A4/GLUT4 to the plasma membrane, possibly by mediating phosphorylation of TBC1D4/AS160. Regulates transcription and chromatin structure by phosphorylating transcription regulators involved in energy metabolism such as CRTC2/TORC2, FOXO3, histone H2B, HDAC5, MEF2C, MLXIPL/ChREBP, EP300, HNF4A, p53/TP53, SREBF1, SREBF2 and PPARGC1A. Acts as a key regulator of glucose homeostasis in liver by phosphorylating CRTC2/TORC2, leading to CRTC2/TORC2 sequestration in the cytoplasm. In response to stress, phosphorylates 'Ser-36' of histone H2B (H2BS36ph), leading to promote transcription. Acts as a key regulator of cell growth and proliferation by phosphorylating FNIP1, TSC2, RPTOR, WDR24 and ATG1/ULK1: in response to nutrient limitation, negatively regulates the mTORC1 complex by phosphorylating RPTOR component of the mTORC1 complex and by phosphorylating and activating TSC2. Also phosphorylates and inhibits GATOR2 subunit WDR24 in response to nutrient limitation, leading to suppress glucose-mediated mTORC1 activation. In response to energetic stress, phosphorylates FNIP1, inactivating the non-canonical mTORC1 signaling, thereby promoting nuclear translocation of TFEB and TFE3, and inducing transcription of lysosomal or autophagy genes. In response to nutrient limitation, promotes autophagy by phosphorylating and activating ATG1/ULK1. In that process also activates WDR45/WIPI4. Phosphorylates CASP6, thereby preventing its autoprocessing and subsequent activation. AMPK also acts as a regulator of circadian rhythm by mediating phosphorylation of CRY1, leading to destabilize it. May regulate the Wnt signaling pathway by phosphorylating CTNNB1, leading to stabilize it. Also acts as a regulator of cellular polarity by remodeling the actin cytoskeleton; probably by indirectly activating myosin. Also phosphorylates CFTR, EEF2K, KLC1, NOS3 and SLC12A1. Plays an important role in the differential regulation of pro-autophagy (composed of PIK3C3, BECN1, PIK3R4 and UVRAG or ATG14) and non-autophagy (composed of PIK3C3, BECN1 and PIK3R4) complexes, in response to glucose starvation. Can inhibit the non-autophagy complex by phosphorylating PIK3C3 and can activate the pro-autophagy complex by phosphorylating BECN1. Upon glucose starvation, promotes ARF6 activation in a kinase-independent manner leading to cell migration. Upon glucose deprivation mediates the phosphorylation of ACSS2 at 'Ser-659', which exposes the nuclear localization signal of ACSS2, required for its interaction with KPNA1 and nuclear translocation. Upon stress, regulates mitochondrial fragmentation through phosphorylation of MTFR1L. This Sus scrofa (Pig) protein is 5'-AMP-activated protein kinase catalytic subunit alpha-2 (PRKAA2).